The primary structure comprises 441 residues: MKTKTLFIFSAILTLSIFAPNETFAQTAGNLIEPKIINAETAQFSTKKLRKVDQMIERDIAAGFPGAVLVVVKDGRIIKKAAYGYSKKYEGSELLRRPAKMKTRTMFDLASNTKMYATNFALQRLVSQGKLDVYEKVSAYLPGFKDQPGDLIKGKDKIRVIDVLQHQSGLPSSFYFYTPEKAGKYYSQERDKTIEYLTKIPLDYQTGTKHVYSDIGYMLLGCIVEKLTGKPLDVYTEQELYKPLRLKHTLYNPLQKGFKPKQFAATERMGNTRDGVIQFPNIRTNTLQGEVHDEKAFYSMDGVSGHAGLFSNADDMAILLQVMLNKGSYRNISLFDQKTADLFTAPSATDPTFALGWRRNGSKSMEWMFGPHASENAYGHTGWTGTVTIIDPAYNLGIALLTNKKHTPVIDPEENPNVFEGDQFPTGSYGSVITAIYEAME.

The N-terminal stretch at 1 to 25 is a signal peptide; it reads MKTKTLFIFSAILTLSIFAPNETFA.

The protein belongs to the peptidase S12 family.

The catalysed reaction is Hydrolyzes the link between N-acetylmuramoyl residues and L-amino acid residues in certain cell-wall glycopeptides.. The protein operates within cell wall biogenesis; peptidoglycan recycling. Involved in muropeptide recycling. Hydrolyzes the amide bond between N-acetylmuramic acid (MurNAc) and the L-alanine residue of the stem peptide. Cannot hydrolyze muropeptides containing N-acetylglucosamine (GlcNAc) at the non-reducing end. This is N-acetylmuramyl-L-alanine amidase from Bacillus subtilis (strain 168).